We begin with the raw amino-acid sequence, 321 residues long: Peroxidase 27 (321 aa).

The signal sequence occupies residues 1–23; sequence MAASKRLVVSCLFLVLLFAQANS. Cystine bridges form between C35-C113, C68-C73, C119-C317, and C196-C228. The Proton acceptor role is filled by H66. Ca(2+) contacts are provided by D67, V70, G72, D74, and S76. Substrate is bound at residue P159. Residue N164 is glycosylated (N-linked (GlcNAc...) asparagine). H189 is a heme b binding site. Ca(2+) is bound at residue T190. N205 carries an N-linked (GlcNAc...) asparagine glycan. Ca(2+) is bound by residues D240, S243, and D248.

It belongs to the peroxidase family. Classical plant (class III) peroxidase subfamily. Heme b is required as a cofactor. Requires Ca(2+) as cofactor. Expressed in the whole plant, but preferentially in roots and flowers.

It is found in the secreted. It catalyses the reaction 2 a phenolic donor + H2O2 = 2 a phenolic radical donor + 2 H2O. In terms of biological role, removal of H(2)O(2), oxidation of toxic reductants, biosynthesis and degradation of lignin, suberization, auxin catabolism, response to environmental stresses such as wounding, pathogen attack and oxidative stress. These functions might be dependent on each isozyme/isoform in each plant tissue. The sequence is that of Peroxidase 27 (PER27) from Arabidopsis thaliana (Mouse-ear cress).